A 114-amino-acid chain; its full sequence is Vacuolar ATPase assembly integral membrane protein VMA21 (114 aa).

Topologically, residues 1-39 are cytoplasmic; that stretch reads MATRRIISQEKTLLEKDDSIGSSPAADEKSNIAPAVPTS. A helical membrane pass occupies residues 40-60; that stretch reads VIMKLLAFTLGMIVIPIGSYF. Over 61 to 73 the chain is Lumenal; it reads ATVDSVFNGNSTY. A helical transmembrane segment spans residues 74–94; that stretch reads AGALAAIMANVVLIGYIFVAM. At 95-114 the chain is on the cytoplasmic side; sequence AEDQSDQQEGGGPGDGKKDR. A Prevents secretion from ER motif is present at residues 111 to 114; it reads KKDR.

The protein belongs to the VMA21 family.

Its subcellular location is the endoplasmic reticulum membrane. It localises to the endoplasmic reticulum-Golgi intermediate compartment membrane. It is found in the cytoplasmic vesicle. The protein localises to the COPII-coated vesicle membrane. Required for the assembly of the V0 complex of the vacuolar ATPase (V-ATPase) in the endoplasmic reticulum. This Chaetomium globosum (strain ATCC 6205 / CBS 148.51 / DSM 1962 / NBRC 6347 / NRRL 1970) (Soil fungus) protein is Vacuolar ATPase assembly integral membrane protein VMA21.